The following is a 261-amino-acid chain: MRLAFVGLGKMGRSILKGALERGFLRPEEVGVLGRTPERSRELAEPFGVRPLTRADLGMAERVLIAVQPRDFPALAPEIAHHRLGYISIMAGISTSVLARRLDNRRVVRAMPNLAVVIGESSTALTALKEAREAEDLAFARALFATVGDVYEIPEHLFDAFTGMSASAPAYLAVVAEALADAGVKMGMPRALALRLAADALAATGELLKGRHPAQVKDEVASPGGTTIHGLHALEARAVRAAFYEAVEAATRRGHELGESE.

Belongs to the pyrroline-5-carboxylate reductase family.

It is found in the cytoplasm. The enzyme catalyses L-proline + NADP(+) = (S)-1-pyrroline-5-carboxylate + NADPH + 2 H(+). It catalyses the reaction L-proline + NAD(+) = (S)-1-pyrroline-5-carboxylate + NADH + 2 H(+). It functions in the pathway amino-acid biosynthesis; L-proline biosynthesis; L-proline from L-glutamate 5-semialdehyde: step 1/1. Catalyzes the reduction of 1-pyrroline-5-carboxylate (PCA) to L-proline. The sequence is that of Pyrroline-5-carboxylate reductase from Thermus thermophilus (strain ATCC BAA-163 / DSM 7039 / HB27).